The primary structure comprises 96 residues: Phosphoribosyl-ATP pyrophosphatase (96 aa).

Belongs to the PRA-PH family.

The protein resides in the cytoplasm. The enzyme catalyses 1-(5-phospho-beta-D-ribosyl)-ATP + H2O = 1-(5-phospho-beta-D-ribosyl)-5'-AMP + diphosphate + H(+). It functions in the pathway amino-acid biosynthesis; L-histidine biosynthesis; L-histidine from 5-phospho-alpha-D-ribose 1-diphosphate: step 2/9. This Methanococcus maripaludis (strain C6 / ATCC BAA-1332) protein is Phosphoribosyl-ATP pyrophosphatase.